A 236-amino-acid polypeptide reads, in one-letter code: Uridylate kinase (236 aa).

10–13 is a binding site for ATP; sequence KLSG. Residues 18 to 23 are involved in allosteric activation by GTP; that stretch reads GEDGYG. UMP is bound at residue Gly52. The ATP site is built by Gly53 and Arg57. UMP-binding positions include Asp72 and 133–140; that span reads TGNPYFTT. Thr160, Tyr166, and Asp169 together coordinate ATP.

Belongs to the UMP kinase family. Homohexamer.

It is found in the cytoplasm. It catalyses the reaction UMP + ATP = UDP + ADP. Its pathway is pyrimidine metabolism; CTP biosynthesis via de novo pathway; UDP from UMP (UMPK route): step 1/1. Allosterically activated by GTP. Inhibited by UTP. Its function is as follows. Catalyzes the reversible phosphorylation of UMP to UDP. This Chlorobium phaeobacteroides (strain DSM 266 / SMG 266 / 2430) protein is Uridylate kinase.